Consider the following 232-residue polypeptide: Golgi SNAP receptor complex member 1 (232 aa).

The Cytoplasmic segment spans residues 1–211 (MGGSSYDVLR…QRINIKKRRD (211 aa)). 2 coiled-coil regions span residues 6-23 (YDVL…IDLK) and 52-80 (GEHV…MSDL). The chain crosses the membrane as a helical; Anchor for type IV membrane protein span at residues 212 to 232 (SLILGAVIGFCVILLLLYAFN).

The protein belongs to the GOSR1 family. Component of several multiprotein Golgi SNARE complexes.

It is found in the golgi apparatus membrane. Functionally, involved in transport from the ER to the Golgi apparatus as well as in intra-Golgi transport. It belongs to a super-family of proteins called t-SNAREs or soluble NSF (N-ethylmaleimide-sensitive factor) attachment protein receptor. The sequence is that of Golgi SNAP receptor complex member 1 (Gos28) from Drosophila melanogaster (Fruit fly).